A 475-amino-acid chain; its full sequence is Ribulose bisphosphate carboxylase large chain (475 aa).

Residues 1-2 constitute a propeptide that is removed on maturation; it reads MS. Pro-3 carries the post-translational modification N-acetylproline. Lys-14 carries the N6,N6,N6-trimethyllysine modification. Residues Asn-123 and Thr-173 each coordinate substrate. The active-site Proton acceptor is Lys-175. Lys-177 provides a ligand contact to substrate. Residues Lys-201, Asp-203, and Glu-204 each contribute to the Mg(2+) site. Lys-201 carries the post-translational modification N6-carboxylysine. His-294 functions as the Proton acceptor in the catalytic mechanism. Substrate-binding residues include Arg-295, His-327, and Ser-379.

Belongs to the RuBisCO large chain family. Type I subfamily. In terms of assembly, heterohexadecamer of 8 large chains and 8 small chains; disulfide-linked. The disulfide link is formed within the large subunit homodimers. The cofactor is Mg(2+). The disulfide bond which can form in the large chain dimeric partners within the hexadecamer appears to be associated with oxidative stress and protein turnover.

Its subcellular location is the plastid. The protein resides in the chloroplast. It catalyses the reaction 2 (2R)-3-phosphoglycerate + 2 H(+) = D-ribulose 1,5-bisphosphate + CO2 + H2O. It carries out the reaction D-ribulose 1,5-bisphosphate + O2 = 2-phosphoglycolate + (2R)-3-phosphoglycerate + 2 H(+). RuBisCO catalyzes two reactions: the carboxylation of D-ribulose 1,5-bisphosphate, the primary event in carbon dioxide fixation, as well as the oxidative fragmentation of the pentose substrate in the photorespiration process. Both reactions occur simultaneously and in competition at the same active site. This Cedrus deodara (Deodar cedar) protein is Ribulose bisphosphate carboxylase large chain.